Here is a 465-residue protein sequence, read N- to C-terminus: G1/S-specific cyclin CLN3 (465 aa).

Positions 44 to 171 constitute a Cyclin N-terminal domain; the sequence is EMLHHLLSVE…HILKSLEWVV (128 aa).

Belongs to the cyclin family. Interacts with CDC28 and SLA1. Post-translationally, hyperphosphorylated. GRR1 preferentially mediates the degradation of hyperphosphorylated CLN3.

Its function is as follows. G1/S-specific cyclin essential for the control of the cell cycle at the G1/S (start) transition. CLN3 may be an upstream activator of the G1 cyclins which directly catalyze start. Required for budding and for cell cycle progression and morphogenesis in environment-induced hyphae. Degradation is mediated by GRR1. Through binding to CDC28, controls the phosphorylation of SLA1 which regulates cortical actin patch dynamics. The chain is G1/S-specific cyclin CLN3 (CLN3) from Candida albicans (strain SC5314 / ATCC MYA-2876) (Yeast).